The sequence spans 59 residues: Potassium channel toxin alpha-KTx 15.2 (59 aa).

Residues Met-1–Cys-22 form the signal peptide. Gln-23 carries the post-translational modification Pyrrolidone carboxylic acid. 3 disulfides stabilise this stretch: Cys-30-Cys-50, Cys-35-Cys-55, and Cys-39-Cys-57.

This sequence belongs to the short scorpion toxin superfamily. Potassium channel inhibitor family. Alpha-KTx 15 subfamily. As to expression, expressed by the venom gland.

The protein resides in the secreted. Blocks both human ERG1/Kv11.1/KCNH2 potassium channels (in a reversible manner) and A-type voltage-gated potassium channels Kv4/KCND (in an irreversible manner). The presence of the Kv4-associated proteins DPP6 or DPP10 is mandatory to have high-affinity blockade of Kv4.2/KCND2 and Kv4.3/KCND3 channels. In contrast, the presence of the Kv4-associated protein KChIP1/KCNIP1 does not enhance the affinity blockade. May dispose of two functional faces (A and B); the two basic residues (Arg-40 and Lys-41) on the alpha-helix side of the peptide that blocks the hERG current (face A) and the typical dyad through which it blocks A-type currents on the beta-sheet side (face B). In adult rat brain, it binds to sites in the striatum, hippocampus, superior colliculus, and cerebellum. It shares the same target in rat brain than AaTX1 (AC Q867F4) and AmmTX3 (AC P60208). In DPP6 knockout mice, A-type currents are much less affected by the toxin than in wild-type mice. This Olivierus martensii (Manchurian scorpion) protein is Potassium channel toxin alpha-KTx 15.2.